The sequence spans 598 residues: Vanadium-dependent bromoperoxidase (598 aa).

The Ca(2+) site is built by Phe361, Gln363, Asp365, Asp368, and Gln370. Vanadate contacts are provided by Lys400 and Arg408. Residue His480 is part of the active site. Residues Ser485, Gly486, His487, Arg547, and His553 each coordinate vanadate. His487 is an active-site residue.

It belongs to the vanadium-dependent haloperoxidase family. In terms of assembly, homododecamer. It depends on Ca(2+) as a cofactor. Vanadate is required as a cofactor.

The enzyme catalyses RH + Br(-) + H2O2 = RBr + 2 H2O.. Functionally, catalyzes the halogenation of organic substrates in the presence of hydrogen peroxide. This Corallina officinalis (Coral seaweed) protein is Vanadium-dependent bromoperoxidase.